A 430-amino-acid chain; its full sequence is MENPFEITAVVAREILDSRGNPTVEVEVYTPVSMGRAAVPSGASTGTHEALELRDGGKRFHGKGVRRAVENVNKIIAPEIIGMDVTWQRDIDMLMIELDGTENKSNLGANAILGVSLAVAKAAANALGLPLYQYIGGTNAYVMPVPMSNVINGGVHAGNELDFQEFMIMPVGAKSFREGIRWVSETYHTLKKVIAEKYGKNAVNVGDEGGFAPPMKEVTEPLEVLIKAIEEAGYKPGDEIAFALDAASSEFYDEKLGKYVVGGKEYDRGELLELYRELVSKYPIVSIEDPFHEEDWEGFVMITRELGGKIQIVGDDLFVTNPKRIRKGIEMGAANALLLKVNQIGTLSEAIDAAYTAFRAGYGVVVSHRSGETEDATIADLAVALNAGQIKTGAPARSDRNAKYNQLIRIEEELEGIAVYPGKRFRNPFL.

Gln164 is a binding site for (2R)-2-phosphoglycerate. Glu208 functions as the Proton donor in the catalytic mechanism. Asp245, Glu288, and Asp315 together coordinate Mg(2+). (2R)-2-phosphoglycerate contacts are provided by Lys340, Arg369, Ser370, and Lys391. The Proton acceptor role is filled by Lys340.

Belongs to the enolase family. It depends on Mg(2+) as a cofactor.

The protein localises to the cytoplasm. It is found in the secreted. The protein resides in the cell surface. It catalyses the reaction (2R)-2-phosphoglycerate = phosphoenolpyruvate + H2O. It functions in the pathway carbohydrate degradation; glycolysis; pyruvate from D-glyceraldehyde 3-phosphate: step 4/5. In terms of biological role, catalyzes the reversible conversion of 2-phosphoglycerate (2-PG) into phosphoenolpyruvate (PEP). It is essential for the degradation of carbohydrates via glycolysis. The sequence is that of Enolase from Thermococcus gammatolerans (strain DSM 15229 / JCM 11827 / EJ3).